The following is a 454-amino-acid chain: tRNA modification GTPase MnmE (454 aa).

Residues arginine 23, glutamate 80, and lysine 120 each coordinate (6S)-5-formyl-5,6,7,8-tetrahydrofolate. Residues 216–377 (GMKVVIAGRP…LRNHLKQSMG (162 aa)) form the TrmE-type G domain. Residue asparagine 226 participates in K(+) binding. GTP-binding positions include 226-231 (NAGKSS), 245-251 (TDIAGTT), 270-273 (DTAG), 335-338 (NKAD), and 358-360 (SAR). Residue serine 230 participates in Mg(2+) binding. Residues threonine 245, isoleucine 247, and threonine 250 each coordinate K(+). Threonine 251 contributes to the Mg(2+) binding site. (6S)-5-formyl-5,6,7,8-tetrahydrofolate is bound at residue lysine 454.

It belongs to the TRAFAC class TrmE-Era-EngA-EngB-Septin-like GTPase superfamily. TrmE GTPase family. Homodimer. Heterotetramer of two MnmE and two MnmG subunits. Requires K(+) as cofactor.

It localises to the cytoplasm. Functionally, exhibits a very high intrinsic GTPase hydrolysis rate. Involved in the addition of a carboxymethylaminomethyl (cmnm) group at the wobble position (U34) of certain tRNAs, forming tRNA-cmnm(5)s(2)U34. The sequence is that of tRNA modification GTPase MnmE from Escherichia coli O7:K1 (strain IAI39 / ExPEC).